The sequence spans 379 residues: Galactose-1-phosphate uridylyltransferase (379 aa).

The segment at 1–21 (MSRSGTDPQQRQQASEADAAA) is disordered. Over residues 9–21 (QQRQQASEADAAA) the composition is skewed to low complexity. Residue Cys75 coordinates Zn(2+). UDP-alpha-D-glucose is bound by residues Ala81, 97–98 (ND), and Asn173. Residue His184 coordinates Zn(2+). The Tele-UMP-histidine intermediate role is filled by His186. Residue Gln188 participates in UDP-alpha-D-glucose binding. 4 residues coordinate Zn(2+): Glu202, His301, His319, and His321. UDP-alpha-D-glucose-binding positions include 334 to 337 (KFMV) and 339 to 340 (YE).

This sequence belongs to the galactose-1-phosphate uridylyltransferase type 1 family. Homodimer. Zn(2+) serves as cofactor.

The catalysed reaction is alpha-D-galactose 1-phosphate + UDP-alpha-D-glucose = alpha-D-glucose 1-phosphate + UDP-alpha-D-galactose. It functions in the pathway carbohydrate metabolism; galactose metabolism. Its function is as follows. Plays an important role in galactose metabolism. In Homo sapiens (Human), this protein is Galactose-1-phosphate uridylyltransferase (GALT).